Reading from the N-terminus, the 137-residue chain is Small ribosomal subunit protein uS9 (137 aa).

The disordered stretch occupies residues 118-137; that stretch reads KERKKYGLRKARKAPQYSKR.

It belongs to the universal ribosomal protein uS9 family.

The polypeptide is Small ribosomal subunit protein uS9 (Acaryochloris marina (strain MBIC 11017)).